Reading from the N-terminus, the 519-residue chain is Exodeoxyribonuclease 7 large subunit (519 aa).

The tract at residues 500–519 (VGRGKTRKPKEEPPAQGSLL) is disordered.

Belongs to the XseA family. As to quaternary structure, heterooligomer composed of large and small subunits.

It localises to the cytoplasm. It catalyses the reaction Exonucleolytic cleavage in either 5'- to 3'- or 3'- to 5'-direction to yield nucleoside 5'-phosphates.. In terms of biological role, bidirectionally degrades single-stranded DNA into large acid-insoluble oligonucleotides, which are then degraded further into small acid-soluble oligonucleotides. The sequence is that of Exodeoxyribonuclease 7 large subunit from Cereibacter sphaeroides (strain ATCC 17023 / DSM 158 / JCM 6121 / CCUG 31486 / LMG 2827 / NBRC 12203 / NCIMB 8253 / ATH 2.4.1.) (Rhodobacter sphaeroides).